The sequence spans 256 residues: MNDIWWQTYGEGNCHLVLLHGWGLNAEVWHCIREELGSHFTLHLVDLPGYGRSSGFGAMTLEEMTAQVAKNAPDQAIWLGWSLGGLVASQMALTHPERVQALVTVASSPCFSAREGWPGIKPEILGGFQQQLSDDFQRTVERFLALQTLGTETARQDARTLKSVVLAQPMPDVEVLNGGLEILKTVDLREALKNVNMPFLRLYGYLDGLVPRKMVPLLDTLWPHSTSQIMAKAAHAPFISHPAAFCQALMTLKSSL.

Positions histidine 15–proline 242 constitute an AB hydrolase-1 domain. Substrate contacts are provided by residues tryptophan 22, serine 82 to leucine 83, and phenylalanine 143 to glutamine 147. Catalysis depends on serine 82, which acts as the Nucleophile. Active-site residues include aspartate 207 and histidine 235. Histidine 235 lines the substrate pocket.

It belongs to the AB hydrolase superfamily. Carboxylesterase BioH family. As to quaternary structure, monomer.

The protein localises to the cytoplasm. The enzyme catalyses 6-carboxyhexanoyl-[ACP] methyl ester + H2O = 6-carboxyhexanoyl-[ACP] + methanol + H(+). It functions in the pathway cofactor biosynthesis; biotin biosynthesis. In terms of biological role, the physiological role of BioH is to remove the methyl group introduced by BioC when the pimeloyl moiety is complete. It allows to synthesize pimeloyl-ACP via the fatty acid synthetic pathway through the hydrolysis of the ester bonds of pimeloyl-ACP esters. This chain is Pimeloyl-[acyl-carrier protein] methyl ester esterase, found in Salmonella agona (strain SL483).